Consider the following 376-residue polypeptide: tRNA-specific 2-thiouridylase MnmA (376 aa).

ATP-binding positions include 17 to 24 and Met-43; that span reads GMSGGVDS. Positions 103–105 are interaction with target base in tRNA; it reads NPD. Residue Cys-108 is the Nucleophile of the active site. Cys-108 and Cys-205 form a disulfide bridge. Gly-132 is an ATP binding site. The interaction with tRNA stretch occupies residues 155–157; it reads KDQ. The Cysteine persulfide intermediate role is filled by Cys-205. The tract at residues 315 to 316 is interaction with tRNA; sequence RY.

It belongs to the MnmA/TRMU family.

It is found in the cytoplasm. The enzyme catalyses S-sulfanyl-L-cysteinyl-[protein] + uridine(34) in tRNA + AH2 + ATP = 2-thiouridine(34) in tRNA + L-cysteinyl-[protein] + A + AMP + diphosphate + H(+). Catalyzes the 2-thiolation of uridine at the wobble position (U34) of tRNA, leading to the formation of s(2)U34. This chain is tRNA-specific 2-thiouridylase MnmA, found in Dichelobacter nodosus (strain VCS1703A).